Consider the following 232-residue polypeptide: Succinyl-CoA:3-ketoacid coenzyme A transferase subunit A (232 aa).

24-30 (GGFGLCG) is a binding site for CoA.

Belongs to the 3-oxoacid CoA-transferase subunit A family. Heterodimer of a subunit A and a subunit B.

The enzyme catalyses a 3-oxo acid + succinyl-CoA = a 3-oxoacyl-CoA + succinate. This chain is Succinyl-CoA:3-ketoacid coenzyme A transferase subunit A (scoA), found in Helicobacter pylori (strain ATCC 700392 / 26695) (Campylobacter pylori).